We begin with the raw amino-acid sequence, 130 residues long: Small ribosomal subunit protein uS11c (130 aa).

This sequence belongs to the universal ribosomal protein uS11 family. As to quaternary structure, part of the 30S ribosomal subunit.

It localises to the plastid. Its subcellular location is the chloroplast. The protein is Small ribosomal subunit protein uS11c of Phaeodactylum tricornutum (strain CCAP 1055/1).